The sequence spans 437 residues: Type II methylase M.HgiEI (437 aa).

The 428-residue stretch at 4–431 folds into the SAM-dependent MTase C5-type domain; sequence FRFIDLFAGI…KRLQCVKLFE (428 aa). C75 is an active-site residue.

This sequence belongs to the class I-like SAM-binding methyltransferase superfamily. C5-methyltransferase family.

It catalyses the reaction a 2'-deoxycytidine in DNA + S-adenosyl-L-methionine = a 5-methyl-2'-deoxycytidine in DNA + S-adenosyl-L-homocysteine + H(+). Its function is as follows. A methylase that recognizes the double-stranded sequence 5'-GGWCC-3', methylates C-? on both strands, and protects the DNA from cleavage by the HgiEI endonuclease. This system is more active than isoschizomeric RM.HgiBI. The chain is Type II methylase M.HgiEI from Herpetosiphon aurantiacus (Herpetosiphon giganteus).